The chain runs to 493 residues: EGF-containing fibulin-like extracellular matrix protein 1 (493 aa).

The signal sequence occupies residues 1–17 (MLQTVFLTMLTLALVKS). One can recognise an EGF-like 1; atypical domain in the interval 26–71 (YTQCTDGYEWDPVRQQCKDIDECDIVPDACKGGMKCVNHYGGYLCL). The region spanning 173–213 (DIDECTSGTHNCRLDQVCINLRGSFTCHCLPGYQKRGEQCV) is the EGF-like 2; calcium-binding domain. 15 disulfide bridges follow: Cys-177–Cys-190, Cys-184–Cys-199, Cys-201–Cys-212, Cys-218–Cys-228, Cys-224–Cys-237, Cys-239–Cys-252, Cys-258–Cys-268, Cys-264–Cys-277, Cys-279–Cys-292, Cys-298–Cys-309, Cys-305–Cys-318, Cys-320–Cys-332, Cys-338–Cys-350, Cys-344–Cys-359, and Cys-365–Cys-377. Residues 214 to 253 (DIDECSVPPYCHQGCVNTPGSFYCQCNPGFQLAANNYTCV) form the EGF-like 3; calcium-binding domain. Asn-249 is a glycosylation site (N-linked (GlcNAc...) asparagine). An EGF-like 4; calcium-binding domain is found at 254 to 293 (DINECDASNQCAQQCYNILGSFICQCNQGYELSSDRLNCE). The interval 259–493 (DASNQCAQQC…LTIIVGPFSF (235 aa)) is mediates interaction with TIMP3. The region spanning 294-333 (DIDECRTSSYLCQYQCVNEPGKFSCMCPQGYQVVRSRTCQ) is the EGF-like 5; calcium-binding domain. The region spanning 334-378 (DINECETTNECREDEMCWNYHGGFRCYPQNPCQDPYVLTSENRCV) is the EGF-like 6; calcium-binding domain.

It belongs to the fibulin family. As to quaternary structure, interacts with ECM1. Interacts with TIMP3. As to expression, expressed by olfactory ensheathing cells (at protein level). Detected in lung, intestine and kidney.

The protein resides in the secreted. The protein localises to the extracellular space. It localises to the extracellular matrix. Binds EGFR, the EGF receptor, inducing EGFR autophosphorylation and the activation of downstream signaling pathways. May play a role in cell adhesion and migration. May function as a negative regulator of chondrocyte differentiation. In the olfactory epithelium, it may regulate glial cell migration, differentiation and the ability of glial cells to support neuronal neurite outgrowth. This is EGF-containing fibulin-like extracellular matrix protein 1 (Efemp1) from Rattus norvegicus (Rat).